Here is a 317-residue protein sequence, read N- to C-terminus: L-lactate dehydrogenase (317 aa).

NAD(+) is bound by residues Val-16, Asp-37, and Tyr-69. Substrate contacts are provided by residues Gln-86, Arg-92, and 124–127 (NPVD). NAD(+) contacts are provided by residues 122–124 (ASN) and Ser-147. 152–155 (DSAR) is a substrate binding site. Catalysis depends on His-179, which acts as the Proton acceptor. Tyr-223 is modified (phosphotyrosine). Thr-232 serves as a coordination point for substrate.

The protein belongs to the LDH/MDH superfamily. LDH family. In terms of assembly, homotetramer.

It is found in the cytoplasm. It catalyses the reaction (S)-lactate + NAD(+) = pyruvate + NADH + H(+). Its pathway is fermentation; pyruvate fermentation to lactate; (S)-lactate from pyruvate: step 1/1. Functionally, catalyzes the conversion of lactate to pyruvate. The protein is L-lactate dehydrogenase of Mycoplasma capricolum subsp. capricolum (strain California kid / ATCC 27343 / NCTC 10154).